A 258-amino-acid polypeptide reads, in one-letter code: Snake venom serine protease 3 (258 aa).

The N-terminal stretch at 1–18 (MVLIRVLANLLILQLSYA) is a signal peptide. Positions 19 to 24 (QKSSEL) are excised as a propeptide. The region spanning 25–249 (IIGGHPCNIN…YTDWIQSIIA (225 aa)) is the Peptidase S1 domain. 6 disulfides stabilise this stretch: cysteine 31–cysteine 163, cysteine 50–cysteine 66, cysteine 98–cysteine 256, cysteine 142–cysteine 210, cysteine 174–cysteine 189, and cysteine 200–cysteine 225. Asparagine 44 is a glycosylation site (N-linked (GlcNAc...) asparagine). Active-site charge relay system residues include histidine 65 and aspartate 110. The active-site Charge relay system is the serine 204. Asparagine 239 carries N-linked (GlcNAc...) asparagine glycosylation.

The protein belongs to the peptidase S1 family. Snake venom subfamily. Monomer. As to expression, expressed by the venom gland.

It localises to the secreted. Functionally, snake venom serine protease that may act in the hemostasis system of the prey. This Protobothrops jerdonii (Jerdon's pitviper) protein is Snake venom serine protease 3.